Consider the following 551-residue polypeptide: Formate--tetrahydrofolate ligase (551 aa).

Position 61–68 (61–68) interacts with ATP; it reads TPAGEGKS.

It belongs to the formate--tetrahydrofolate ligase family.

It catalyses the reaction (6S)-5,6,7,8-tetrahydrofolate + formate + ATP = (6R)-10-formyltetrahydrofolate + ADP + phosphate. Its pathway is one-carbon metabolism; tetrahydrofolate interconversion. The sequence is that of Formate--tetrahydrofolate ligase from Lactiplantibacillus plantarum (strain ATCC BAA-793 / NCIMB 8826 / WCFS1) (Lactobacillus plantarum).